Here is a 179-residue protein sequence, read N- to C-terminus: Acireductone dioxygenase (179 aa).

A compositionally biased stretch (acidic residues) spans 1–12 (MVEAWYMDDSEE). The disordered stretch occupies residues 1–21 (MVEAWYMDDSEEDQRRPHRLE). The Fe(2+) site is built by His-88, His-90, Glu-94, and His-133. His-88, His-90, Glu-94, and His-133 together coordinate Ni(2+).

This sequence belongs to the acireductone dioxygenase (ARD) family. In terms of assembly, monomer. Interacts with MMP14. Requires Fe(2+) as cofactor. Ni(2+) serves as cofactor.

The protein localises to the cytoplasm. It is found in the nucleus. Its subcellular location is the cell membrane. The catalysed reaction is 1,2-dihydroxy-5-(methylsulfanyl)pent-1-en-3-one + O2 = 4-methylsulfanyl-2-oxobutanoate + formate + 2 H(+). The enzyme catalyses 1,2-dihydroxy-5-(methylsulfanyl)pent-1-en-3-one + O2 = 3-(methylsulfanyl)propanoate + CO + formate + 2 H(+). It participates in amino-acid biosynthesis; L-methionine biosynthesis via salvage pathway; L-methionine from S-methyl-5-thio-alpha-D-ribose 1-phosphate: step 5/6. Catalyzes 2 different reactions between oxygen and the acireductone 1,2-dihydroxy-3-keto-5-methylthiopentene (DHK-MTPene) depending upon the metal bound in the active site. Fe-containing acireductone dioxygenase (Fe-ARD) produces formate and 2-keto-4-methylthiobutyrate (KMTB), the alpha-ketoacid precursor of methionine in the methionine recycle pathway. Ni-containing acireductone dioxygenase (Ni-ARD) produces methylthiopropionate, carbon monoxide and formate, and does not lie on the methionine recycle pathway. Also down-regulates cell migration mediated by MMP14. The sequence is that of Acireductone dioxygenase from Monodelphis domestica (Gray short-tailed opossum).